The following is a 138-amino-acid chain: Acidic phospholipase A2 Ts-A1 (138 aa).

The first 16 residues, 1-16 (MRTLWIMAVLQVGVEG), serve as a signal peptide directing secretion. Disulfide bonds link cysteine 42/cysteine 131, cysteine 44/cysteine 60, cysteine 59/cysteine 111, cysteine 65/cysteine 138, cysteine 66/cysteine 104, cysteine 73/cysteine 97, and cysteine 91/cysteine 102. Ca(2+) contacts are provided by phenylalanine 43, glycine 45, and glycine 47. Residue histidine 63 is part of the active site. Aspartate 64 lines the Ca(2+) pocket. Aspartate 105 is an active-site residue.

Requires Ca(2+) as cofactor. As to expression, expressed by the venom gland.

It is found in the secreted. It catalyses the reaction a 1,2-diacyl-sn-glycero-3-phosphocholine + H2O = a 1-acyl-sn-glycero-3-phosphocholine + a fatty acid + H(+). In terms of biological role, snake venom phospholipase A2 (PLA2) that shows a moderate inhibition of ADP-induced human platelet aggregation when tested on platelet rich plasma. Exhibits high hydrolytic activities and prefers the anionic micelles (dPPC with deoxycholate) to the zwitterionic micelles (dPPC with Triton X-100). PLA2 catalyzes the calcium-dependent hydrolysis of the 2-acyl groups in 3-sn-phosphoglycerides. This Trimeresurus stejnegeri (Chinese green tree viper) protein is Acidic phospholipase A2 Ts-A1.